The chain runs to 289 residues: Acetyl-coenzyme A carboxylase carboxyl transferase subunit beta (289 aa).

The CoA carboxyltransferase N-terminal domain maps to 28–289; sequence VMTKCPKCKK…QGGGMAVWQS (262 aa). The Zn(2+) site is built by C32, C35, C51, and C54. The segment at 32-54 adopts a C4-type zinc-finger fold; sequence CPKCKKIMYTKELLKNLKVCVNC.

It belongs to the AccD/PCCB family. Acetyl-CoA carboxylase is a heterohexamer composed of biotin carboxyl carrier protein (AccB), biotin carboxylase (AccC) and two subunits each of ACCase subunit alpha (AccA) and ACCase subunit beta (AccD). Zn(2+) is required as a cofactor.

Its subcellular location is the cytoplasm. The catalysed reaction is N(6)-carboxybiotinyl-L-lysyl-[protein] + acetyl-CoA = N(6)-biotinyl-L-lysyl-[protein] + malonyl-CoA. It participates in lipid metabolism; malonyl-CoA biosynthesis; malonyl-CoA from acetyl-CoA: step 1/1. Its function is as follows. Component of the acetyl coenzyme A carboxylase (ACC) complex. Biotin carboxylase (BC) catalyzes the carboxylation of biotin on its carrier protein (BCCP) and then the CO(2) group is transferred by the transcarboxylase to acetyl-CoA to form malonyl-CoA. This chain is Acetyl-coenzyme A carboxylase carboxyl transferase subunit beta, found in Bacillus mycoides (strain KBAB4) (Bacillus weihenstephanensis).